A 134-amino-acid chain; its full sequence is Large ribosomal subunit protein eL32 (134 aa).

The protein belongs to the eukaryotic ribosomal protein eL32 family.

This Picrophilus torridus (strain ATCC 700027 / DSM 9790 / JCM 10055 / NBRC 100828 / KAW 2/3) protein is Large ribosomal subunit protein eL32 (rpl32e).